A 353-amino-acid polypeptide reads, in one-letter code: Quinolinate synthase (353 aa).

The iminosuccinate site is built by His-47 and Ser-68. Cys-113 is a [4Fe-4S] cluster binding site. Iminosuccinate is bound by residues 139 to 141 (YAN) and Ser-156. Cys-200 provides a ligand contact to [4Fe-4S] cluster. Iminosuccinate-binding positions include 226–228 (HPE) and Thr-243. Cys-297 is a [4Fe-4S] cluster binding site.

This sequence belongs to the quinolinate synthase family. Type 1 subfamily. Requires [4Fe-4S] cluster as cofactor.

The protein localises to the cytoplasm. It carries out the reaction iminosuccinate + dihydroxyacetone phosphate = quinolinate + phosphate + 2 H2O + H(+). The protein operates within cofactor biosynthesis; NAD(+) biosynthesis; quinolinate from iminoaspartate: step 1/1. Functionally, catalyzes the condensation of iminoaspartate with dihydroxyacetone phosphate to form quinolinate. The chain is Quinolinate synthase from Vibrio vulnificus (strain YJ016).